We begin with the raw amino-acid sequence, 300 residues long: (R)-3-hydroxydecanoyl-ACP:CoA transacylase (300 aa).

Residues 29–253 (TIILVNGSLS…HTIRNAGHFI (225 aa)) enclose the AB hydrolase-1 domain.

It functions in the pathway polyester biosynthesis; polyhydroxyalkanoate biosynthesis. In terms of biological role, catalyzes the transfer of the acyl moiety from in vitro synthesized 3-hydroxydecanoyl-CoA to acyl carrier protein. The chain is (R)-3-hydroxydecanoyl-ACP:CoA transacylase (phaG) from Pseudomonas aeruginosa (strain ATCC 15692 / DSM 22644 / CIP 104116 / JCM 14847 / LMG 12228 / 1C / PRS 101 / PAO1).